The sequence spans 152 residues: Putative pre-16S rRNA nuclease (152 aa).

The protein belongs to the YqgF nuclease family.

It localises to the cytoplasm. In terms of biological role, could be a nuclease involved in processing of the 5'-end of pre-16S rRNA. The chain is Putative pre-16S rRNA nuclease from Bifidobacterium longum (strain DJO10A).